The sequence spans 49 residues: Heme exporter protein C (49 aa).

Belongs to the CcmC/CycZ/HelC family.

The protein resides in the cell inner membrane. In terms of biological role, required for the export of heme to the periplasm for the biogenesis of c-type cytochromes. This chain is Heme exporter protein C, found in Rhizobium leguminosarum bv. viciae.